Consider the following 167-residue polypeptide: Gametocyte-specific factor 1 (167 aa).

CHHC U11-48K-type zinc fingers lie at residues 14–41 (LLQC…RKNH) and 48–75 (LATC…DDKS). Residues Cys-17, His-23, His-33, Cys-37, Cys-51, His-57, His-67, and Cys-71 each contribute to the Zn(2+) site.

It belongs to the UPF0224 (FAM112) family.

The protein resides in the cytoplasm. In terms of biological role, required for spermatogenesis and is involved in the suppression of retrotransposon transcription in male germ cells. This is Gametocyte-specific factor 1 (GTSF1) from Bos taurus (Bovine).